We begin with the raw amino-acid sequence, 294 residues long: Cytidine deaminase (294 aa).

CMP/dCMP-type deaminase domains are found at residues 48–168 and 186–294; these read DEDA…FGPK and LTGD…VLLA. 89–91 serves as a coordination point for substrate; it reads NME. His-102 is a binding site for Zn(2+). Glu-104 acts as the Proton donor in catalysis. Positions 129 and 132 each coordinate Zn(2+).

This sequence belongs to the cytidine and deoxycytidylate deaminase family. Homodimer. The cofactor is Zn(2+).

It carries out the reaction cytidine + H2O + H(+) = uridine + NH4(+). The enzyme catalyses 2'-deoxycytidine + H2O + H(+) = 2'-deoxyuridine + NH4(+). Functionally, this enzyme scavenges exogenous and endogenous cytidine and 2'-deoxycytidine for UMP synthesis. The protein is Cytidine deaminase of Escherichia coli O7:K1 (strain IAI39 / ExPEC).